Reading from the N-terminus, the 199-residue chain is TATA-box-binding protein (199 aa).

Repeat copies occupy residues I10 to L86 and V101 to L177.

Belongs to the TBP family.

Its function is as follows. General factor that plays a role in the activation of archaeal genes transcribed by RNA polymerase. Binds specifically to the TATA box promoter element which lies close to the position of transcription initiation. The protein is TATA-box-binding protein of Pyrobaculum islandicum (strain DSM 4184 / JCM 9189 / GEO3).